The chain runs to 103 residues: Acylphosphatase-2 (103 aa).

An N-acetylserine modification is found at serine 2. Residues 13–103 (SVDYEVFGRV…LDFSGFSTRY (91 aa)) enclose the Acylphosphatase-like domain. Residues arginine 28 and asparagine 46 contribute to the active site.

The protein belongs to the acylphosphatase family.

The catalysed reaction is an acyl phosphate + H2O = a carboxylate + phosphate + H(+). In terms of biological role, its physiological role is not yet clear. The polypeptide is Acylphosphatase-2 (ACYP2) (Gallus gallus (Chicken)).